The primary structure comprises 252 residues: Aspartate/glutamate leucyltransferase (252 aa).

This sequence belongs to the R-transferase family. Bpt subfamily.

The protein resides in the cytoplasm. It catalyses the reaction N-terminal L-glutamyl-[protein] + L-leucyl-tRNA(Leu) = N-terminal L-leucyl-L-glutamyl-[protein] + tRNA(Leu) + H(+). It carries out the reaction N-terminal L-aspartyl-[protein] + L-leucyl-tRNA(Leu) = N-terminal L-leucyl-L-aspartyl-[protein] + tRNA(Leu) + H(+). In terms of biological role, functions in the N-end rule pathway of protein degradation where it conjugates Leu from its aminoacyl-tRNA to the N-termini of proteins containing an N-terminal aspartate or glutamate. This chain is Aspartate/glutamate leucyltransferase, found in Agrobacterium fabrum (strain C58 / ATCC 33970) (Agrobacterium tumefaciens (strain C58)).